A 275-amino-acid polypeptide reads, in one-letter code: 3-methyl-2-oxobutanoate hydroxymethyltransferase (275 aa).

Positions 49 and 88 each coordinate Mg(2+). 3-methyl-2-oxobutanoate contacts are provided by residues 49-50, Asp88, and Lys118; that span reads DS. Glu120 contributes to the Mg(2+) binding site. Residue Glu187 is the Proton acceptor of the active site.

Belongs to the PanB family. Homodecamer; pentamer of dimers. Requires Mg(2+) as cofactor.

The protein localises to the cytoplasm. The enzyme catalyses 3-methyl-2-oxobutanoate + (6R)-5,10-methylene-5,6,7,8-tetrahydrofolate + H2O = 2-dehydropantoate + (6S)-5,6,7,8-tetrahydrofolate. It participates in cofactor biosynthesis; (R)-pantothenate biosynthesis; (R)-pantoate from 3-methyl-2-oxobutanoate: step 1/2. Functionally, catalyzes the reversible reaction in which hydroxymethyl group from 5,10-methylenetetrahydrofolate is transferred onto alpha-ketoisovalerate to form ketopantoate. This is 3-methyl-2-oxobutanoate hydroxymethyltransferase from Hyphomonas neptunium (strain ATCC 15444).